The following is a 303-amino-acid chain: Uridylate-specific endoribonuclease C (303 aa).

The first 16 residues, 1–16, serve as a signal peptide directing secretion; the sequence is MVYLVFLCLLPSLISG. An EndoU domain is found at 32-303; sequence TDAEIQSLAE…KRFVASSYPI (272 aa). Active-site residues include H181, H196, and K239. Residue N287 is glycosylated (N-linked (GlcNAc...) asparagine).

This sequence belongs to the ENDOU family. As to quaternary structure, monomer. The cofactor is Mn(2+).

It localises to the secreted. It carries out the reaction ribonucleotidyl-uridine-RNA = a 5'-end dephospho-uridine-RNA + a 3'-end 2',3'-cyclophospho-ribonucleotide-RNA. Its function is as follows. Endoribonuclease that cleaves single-stranded RNAs at 5' of uridylates and releases a product with a 2',3'-cyclic phosphate at the 3'-end. This chain is Uridylate-specific endoribonuclease C (endou-c), found in Xenopus laevis (African clawed frog).